The following is an 802-amino-acid chain: Exocyst complex component 6 (802 aa).

Belongs to the SEC15 family. As to quaternary structure, the exocyst complex is composed of EXOC1, EXOC2, EXOC3, EXOC4, EXOC5, EXOC6, EXOC7 and EXOC8. Interacts with CNTRL. Interacts with RAB11A in a GTP-dependent manner.

Its subcellular location is the cytoplasm. The protein localises to the perinuclear region. It is found in the cell projection. The protein resides in the growth cone. It localises to the midbody. Its subcellular location is the midbody ring. Functionally, component of the exocyst complex involved in the docking of exocytic vesicles with fusion sites on the plasma membrane. Together with RAB11A, RAB3IP, RAB8A, PARD3, PRKCI, ANXA2, CDC42 and DNMBP promotes transcytosis of PODXL to the apical membrane initiation sites (AMIS), apical surface formation and lumenogenesis. This is Exocyst complex component 6 (Exoc6) from Mus musculus (Mouse).